We begin with the raw amino-acid sequence, 240 residues long: Vacuolar-sorting protein SNF7 (240 aa).

Threonine 72 is modified (phosphothreonine). Residues serine 119 and serine 193 each carry the phosphoserine modification. The disordered stretch occupies residues 193 to 240 (SENKVSLPSVPSNKIKQSENSVKDGEEEEDEEDEDEKALRELQAEMGL). The segment covering 195 to 212 (NKVSLPSVPSNKIKQSEN) has biased composition (polar residues). Residues 217 to 228 (GEEEEDEEDEDE) are compositionally biased toward acidic residues. Residue lysine 229 forms a Glycyl lysine isopeptide (Lys-Gly) (interchain with G-Cter in ubiquitin) linkage. The segment covering 229–240 (KALRELQAEMGL) has biased composition (basic and acidic residues).

The protein belongs to the SNF7 family. In terms of assembly, core component of the ESCRT-III complex (endosomal sorting required for transport complex III). ESCRT-III appears to be sequentially assembled as a flat lattice on the endosome membrane and forms a transient 450 kDa complex that contains DID4, oligomerized SNF7, VPS20 and VPS24. SNF7 polymerizes into spirals at the surface of lipid bilayers. SNF7 polymerization is nucleated by association of SNF7 with VPS20; the process is terminated through association of VPS24, possibly by capping the SNF7 filament. Interacts with VTA1; the interaction requires DID2. Interacts with BRO1. Interacts with DOA4. Interacts with HEH1 and HEH2. Interacts with RIM20 and YGR122W.

The protein localises to the cytoplasm. Its subcellular location is the endosome membrane. It is found in the nucleus envelope. In terms of biological role, acts a component of the ESCRT-III complex required for the sorting and concentration of proteins resulting in the entry of these proteins into the invaginating vesicles of the multivesicular body (MVB). The sequential action of ESCRT-0, -I, and -II together with the ordered assembly of ESCRT-III links membrane invagination to cargo sorting. Membrane scission in the neck of the growing vesicle releases mature, cargo-laden ILVs into the lumen. ESCRT-III is critical for late steps in MVB sorting, such as membrane invagination and final cargo sorting and recruitment of late-acting components of the sorting machinery. SNF7 is the most abundant ESCRT-III subunit which forms membrane-sculpting filaments with 30 Angstrom periodicity and a exposed cationic membrane-binding surface. Its activation requires a prominent conformational rearrangement to expose protein-membrane and protein-protein interfaces. SNF7 filaments then form spirals that could function as spiral springs. The elastic expansion of compressed SNF7 spirals generates an area difference between the two sides of the membrane and thus curvature which could be the origin of membrane deformation leading eventually to fission. SNF7 recruits BRO1, which in turn recruits DOA4, which deubiquitinates cargos before their enclosure within MVB vesicles. ESCRT-III is also recruited to the nuclear envelope (NE) by integral INM proteins to surveil and clear defective nuclear pore complex (NPC) assembly intermediates to ensure the fidelity of NPC assembly. The chain is Vacuolar-sorting protein SNF7 from Saccharomyces cerevisiae (strain ATCC 204508 / S288c) (Baker's yeast).